A 127-amino-acid chain; its full sequence is Large ribosomal subunit protein bL20 (127 aa).

This sequence belongs to the bacterial ribosomal protein bL20 family.

Its function is as follows. Binds directly to 23S ribosomal RNA and is necessary for the in vitro assembly process of the 50S ribosomal subunit. It is not involved in the protein synthesizing functions of that subunit. The protein is Large ribosomal subunit protein bL20 of Streptomyces griseus subsp. griseus (strain JCM 4626 / CBS 651.72 / NBRC 13350 / KCC S-0626 / ISP 5235).